Here is a 392-residue protein sequence, read N- to C-terminus: UPF0229 protein CPE1333 (392 aa).

Residues 75–100 (VTTGTGEERRGDRISSDKRKAISNNK) form a disordered region. Positions 80–94 (GEERRGDRISSDKRK) are enriched in basic and acidic residues.

Belongs to the UPF0229 family.

The polypeptide is UPF0229 protein CPE1333 (Clostridium perfringens (strain 13 / Type A)).